The sequence spans 482 residues: Protein nucleotidyltransferase YdiU (482 aa).

Residues Gly88, Gly90, Arg91, Lys111, Asp123, Gly124, Arg174, and Arg181 each coordinate ATP. Catalysis depends on Asp250, which acts as the Proton acceptor. Mg(2+) contacts are provided by Asn251 and Asp260. Asp260 contacts ATP.

The protein belongs to the SELO family. Requires Mg(2+) as cofactor. It depends on Mn(2+) as a cofactor.

It carries out the reaction L-seryl-[protein] + ATP = 3-O-(5'-adenylyl)-L-seryl-[protein] + diphosphate. It catalyses the reaction L-threonyl-[protein] + ATP = 3-O-(5'-adenylyl)-L-threonyl-[protein] + diphosphate. The catalysed reaction is L-tyrosyl-[protein] + ATP = O-(5'-adenylyl)-L-tyrosyl-[protein] + diphosphate. The enzyme catalyses L-histidyl-[protein] + UTP = N(tele)-(5'-uridylyl)-L-histidyl-[protein] + diphosphate. It carries out the reaction L-seryl-[protein] + UTP = O-(5'-uridylyl)-L-seryl-[protein] + diphosphate. It catalyses the reaction L-tyrosyl-[protein] + UTP = O-(5'-uridylyl)-L-tyrosyl-[protein] + diphosphate. Its function is as follows. Nucleotidyltransferase involved in the post-translational modification of proteins. It can catalyze the addition of adenosine monophosphate (AMP) or uridine monophosphate (UMP) to a protein, resulting in modifications known as AMPylation and UMPylation. This is Protein nucleotidyltransferase YdiU from Cronobacter sakazakii (strain ATCC BAA-894) (Enterobacter sakazakii).